Reading from the N-terminus, the 638-residue chain is E3 ubiquitin-protein ligase TRIM47 (638 aa).

Position 1 is an N-acetylmethionine (M1). The RING-type zinc finger occupies 9–58; sequence CPICLEPLREPVTLPCGHNFCLACLGALWPHRGASGAGGPGGAARCPLCQ. T72 is subject to Phosphothreonine. Residues 79–119 form a disordered region; the sequence is LRQGSGPGSGPGPAPALAPEPSAPSALPSVPEPSAPCAPEP. Pro residues-rich tracts occupy residues 88–100 and 108–119; these read GPGP…PEPS and VPEPSAPCAPEP. The B box-type zinc-finger motif lies at 177 to 217; it reads LEESLCPRHLRPLERYCRAERVCLCEACAAQEHRGHELVPL. Positions 182, 185, 204, and 209 each coordinate Zn(2+). A coiled-coil region spans residues 296-324; that stretch reads MLGRSQGDLRRQEEQRSRLSRARQNLSQV. 2 disordered regions span residues 300 to 322 and 384 to 411; these read SQGD…QNLS and LRGP…LEST. Over residues 302 to 312 the composition is skewed to basic and acidic residues; sequence GDLRRQEEQRS. One can recognise a B30.2/SPRY domain in the interval 410–631; it reads STNLLESEAP…LQIGPLKKSC (222 aa). The residue at position 461 (S461) is a Phosphoserine. An Omega-N-methylarginine modification is found at R582. A Phosphoserine modification is found at S588.

It belongs to the TRIM/RBCC family. In terms of tissue distribution, low expression in most tissues. Higher expression in kidney tubular cells. Overexpressed in astrocytoma tumor cells.

The protein resides in the cytoplasm. It localises to the nucleus. It carries out the reaction S-ubiquitinyl-[E2 ubiquitin-conjugating enzyme]-L-cysteine + [acceptor protein]-L-lysine = [E2 ubiquitin-conjugating enzyme]-L-cysteine + N(6)-ubiquitinyl-[acceptor protein]-L-lysine.. It functions in the pathway protein modification; protein ubiquitination. Its function is as follows. E3 ubiquitin-protein ligase that mediates the ubiquitination and proteasomal degradation of CYLD. The protein is E3 ubiquitin-protein ligase TRIM47 of Homo sapiens (Human).